The chain runs to 364 residues: Pre-small/secreted glycoprotein (364 aa).

The first 32 residues, 1 to 32, serve as a signal peptide directing secretion; the sequence is MGVTGILQLPRDRFKRTSFFLWVIILFQRTFS. Asn40 carries N-linked (GlcNAc...) asparagine; by host glycosylation. 2 cysteine pairs are disulfide-bonded: Cys108/Cys135 and Cys121/Cys147. Asn204, Asn228, Asn238, Asn257, and Asn268 each carry an N-linked (GlcNAc...) asparagine; by host glycan.

The protein belongs to the filoviruses glycoprotein family. Homodimer; disulfide-linked. The homodimers are linked by two disulfide bonds in a parallel orientation. As to quaternary structure, monomer. Post-translationally, this precursor is processed into mature sGP and delta-peptide by host furin or furin-like proteases. The cleavage site corresponds to the furin optimal cleavage sequence [KR]-X-[KR]-R. In terms of processing, N-glycosylated. O-glycosylated.

Its subcellular location is the secreted. Its function is as follows. Seems to possess an anti-inflammatory activity as it can reverse the barrier-decreasing effects of TNF alpha. Might therefore contribute to the lack of inflammatory reaction seen during infection in spite the of extensive necrosis and massive virus production. Does not seem to be involved in activation of primary macrophages. Does not seem to interact specifically with neutrophils. Viroporin that permeabilizes mammalian cell plasma membranes. It acts by altering permeation of ionic compounds and small molecules. This activity may lead to viral enterotoxic activity. This chain is Pre-small/secreted glycoprotein (GP), found in Zaire ebolavirus (strain Gabon-94) (ZEBOV).